The following is a 72-amino-acid chain: Translation initiation factor IF-1 (72 aa).

Residues 1–72 enclose the S1-like domain; sequence MAKEEAIEIE…TKGRITYRYK (72 aa).

This sequence belongs to the IF-1 family. In terms of assembly, component of the 30S ribosomal translation pre-initiation complex which assembles on the 30S ribosome in the order IF-2 and IF-3, IF-1 and N-formylmethionyl-tRNA(fMet); mRNA recruitment can occur at any time during PIC assembly.

The protein resides in the cytoplasm. One of the essential components for the initiation of protein synthesis. Stabilizes the binding of IF-2 and IF-3 on the 30S subunit to which N-formylmethionyl-tRNA(fMet) subsequently binds. Helps modulate mRNA selection, yielding the 30S pre-initiation complex (PIC). Upon addition of the 50S ribosomal subunit IF-1, IF-2 and IF-3 are released leaving the mature 70S translation initiation complex. The protein is Translation initiation factor IF-1 of Chlorobium phaeobacteroides (strain DSM 266 / SMG 266 / 2430).